Consider the following 513-residue polypeptide: Coniferin beta-glucosidase (513 aa).

The first 23 residues, 1-23, serve as a signal peptide directing secretion; the sequence is MEVSVLMWVLLFYSLLGFQVTTA. A beta-D-glucoside contacts are provided by residues Gln-44, His-145, and 190 to 191; that span reads NE. Residue Glu-191 is the Proton donor of the active site. Residues Cys-210 and Cys-219 are joined by a disulfide bond. Asn-223 is a glycosylation site (N-linked (GlcNAc...) asparagine). Tyr-336 and Glu-408 together coordinate a beta-D-glucoside. Glu-408 (nucleophile) is an active-site residue. Asn-447 carries N-linked (GlcNAc...) asparagine glycosylation. A beta-D-glucoside is bound by residues Trp-457, 464-465, and Phe-473; that span reads EW.

This sequence belongs to the glycosyl hydrolase 1 family. In terms of assembly, homodimer. Glycosylated.

The catalysed reaction is 4-O-(beta-D-glucosyl)-(E)-coniferol + H2O = (E)-coniferol + D-glucose. Its activity is regulated as follows. Inhibited by glucono-1,5-lactone, but not by bromoconduritol or conduritol B epoxide. Its function is as follows. Involved in the release of monolignols for lignin biosynthesis. Unable to hydrolyze 4-nitrophenyl beta-cellobioside or alpha-linked methylumbelliferyl glucoside. The protein is Coniferin beta-glucosidase of Pinus contorta (Shore pine).